We begin with the raw amino-acid sequence, 337 residues long: Monoacylglycerol lipase abhd6-B (337 aa).

The Extracellular segment spans residues 1 to 19 (MDIDVLNMFLVAGGTLLVP). Residues 20–42 (LLAFMTSFLLWPAALIRIYYWYW) form a helical; Signal-anchor for type II membrane protein membrane-spanning segment. Topologically, residues 43–337 (RRALGMQVKY…QSTDNHKKHD (295 aa)) are cytoplasmic. In terms of domain architecture, AB hydrolase-1 spans 72–313 (PSVLMLHGFS…CGHSVVMERP (242 aa)). Residue Ser148 is the Nucleophile of the active site. Catalysis depends on charge relay system residues Asp278 and His306.

This sequence belongs to the AB hydrolase superfamily.

The protein localises to the late endosome membrane. The protein resides in the lysosome membrane. It localises to the mitochondrion membrane. The enzyme catalyses Hydrolyzes glycerol monoesters of long-chain fatty acids.. It carries out the reaction 1-octanoylglycerol + H2O = octanoate + glycerol + H(+). It catalyses the reaction 1-decanoylglycerol + H2O = decanoate + glycerol + H(+). The catalysed reaction is 1-dodecanoylglycerol + H2O = dodecanoate + glycerol + H(+). The enzyme catalyses 1-tetradecanoylglycerol + H2O = tetradecanoate + glycerol + H(+). It carries out the reaction 2-hexadecanoylglycerol + H2O = glycerol + hexadecanoate + H(+). It catalyses the reaction 2-(9Z-octadecenoyl)-glycerol + H2O = glycerol + (9Z)-octadecenoate + H(+). The catalysed reaction is 1-(9Z-octadecenoyl)-glycerol + H2O = glycerol + (9Z)-octadecenoate + H(+). The enzyme catalyses 2-(9Z,12Z-octadecadienoyl)-glycerol + H2O = (9Z,12Z)-octadecadienoate + glycerol + H(+). It carries out the reaction 2-(5Z,8Z,11Z,14Z-eicosatetraenoyl)-glycerol + H2O = glycerol + (5Z,8Z,11Z,14Z)-eicosatetraenoate + H(+). It catalyses the reaction 1-(5Z,8Z,11Z,14Z-eicosatetraenoyl)-glycerol + H2O = glycerol + (5Z,8Z,11Z,14Z)-eicosatetraenoate + H(+). The catalysed reaction is 1-(9Z,12Z-octadecadienoyl)-glycerol + H2O = (9Z,12Z)-octadecadienoate + glycerol + H(+). The enzyme catalyses 3-(9Z-octadecenoyl)-sn-glycero-1-phospho-(3'-(9Z-octadecenoyl)-1'-sn-glycerol) + H2O = 3-(9Z-octadecenoyl)-sn-glycero-1-phospho-(1'-sn-glycerol) + (9Z)-octadecenoate + H(+). It carries out the reaction (S,S)-2-(9Z-octadecenoyl)-sn-glycero-1-phospho-(2'-(9Z-octadecenoyl)-1'-sn-glycerol) + H2O = (S,S)-2-(9Z-octadecenoyl)-sn-glycero-1-phospho-(1'-sn-glycerol) + (9Z)-octadecenoate + H(+). It catalyses the reaction (R,R)-2-(9Z-octadecenoyl)-sn-glycero-3-phospho-(2'-(9Z-octadecenoyl)-3'-sn-glycerol) + H2O = (R,R)-2-(9Z-octadecenoyl)-sn-glycero-3-phospho-(3'-sn-glycerol) + (9Z)-octadecenoate + H(+). Its function is as follows. Lipase that preferentially hydrolysis medium-chain saturated monoacylglycerols including 2-arachidonoylglycerol. Through 2-arachidonoylglycerol degradation may regulate endocannabinoid signaling pathways. Also has a lysophosphatidyl lipase activity with a preference for lysophosphatidylglycerol among other lysophospholipids. Also able to degrade bis(monoacylglycero)phosphate (BMP) and constitutes the major enzyme for BMP catabolism. BMP, also known as lysobisphosphatidic acid, is enriched in late endosomes and lysosomes and plays a key role in the formation of intraluminal vesicles and in lipid sorting. This is Monoacylglycerol lipase abhd6-B (abhd6-b) from Xenopus laevis (African clawed frog).